Consider the following 71-residue polypeptide: Large ribosomal subunit protein bL31 (71 aa).

Positions 16, 18, 38, and 41 each coordinate Zn(2+).

This sequence belongs to the bacterial ribosomal protein bL31 family. Type A subfamily. As to quaternary structure, part of the 50S ribosomal subunit. Zn(2+) is required as a cofactor.

Its function is as follows. Binds the 23S rRNA. The sequence is that of Large ribosomal subunit protein bL31 from Neisseria meningitidis serogroup A / serotype 4A (strain DSM 15465 / Z2491).